A 1331-amino-acid polypeptide reads, in one-letter code: Xanthine dehydrogenase/oxidase (1331 aa).

The region spanning 4–91 is the 2Fe-2S ferredoxin-type domain; sequence DELVFFVNGK…HVAVTTVEGI (88 aa). [2Fe-2S] cluster contacts are provided by cysteine 43, cysteine 48, cysteine 51, cysteine 73, cysteine 112, cysteine 115, cysteine 147, and cysteine 149. Residues 228–413 enclose the FAD-binding PCMH-type domain; the sequence is FEGERVTWIQ…LSIEIPYSKE (186 aa). Residues 256–263, phenylalanine 336, 346–350, aspartate 359, leucine 403, and lysine 421 contribute to the FAD site; these read LVVGNTEI and SIGGN. Cysteine 535 and cysteine 992 are joined by a disulfide. Glutamine 767 and phenylalanine 798 together coordinate Mo-molybdopterin. Residues glutamate 802 and arginine 880 each contribute to the substrate site. A Mo-molybdopterin-binding site is contributed by arginine 912. Substrate-binding residues include phenylalanine 914 and threonine 1010. Residue alanine 1079 coordinates Mo-molybdopterin. The active-site Proton acceptor is the glutamate 1261.

Belongs to the xanthine dehydrogenase family. As to quaternary structure, homodimer. Interacts with BTN1A1. The cofactor is [2Fe-2S] cluster. Requires FAD as cofactor. It depends on Mo-molybdopterin as a cofactor. Subject to partial proteolysis; this alters the enzyme from the dehydrogenase form (D) to the oxidase form (O). Post-translationally, contains sulfhydryl groups that are easily oxidized (in vitro); this alters the enzyme from the dehydrogenase form (D) to the oxidase form (O).

It is found in the peroxisome. The protein localises to the cytoplasm. The protein resides in the secreted. The catalysed reaction is xanthine + NAD(+) + H2O = urate + NADH + H(+). It carries out the reaction hypoxanthine + NAD(+) + H2O = xanthine + NADH + H(+). The enzyme catalyses xanthine + O2 + H2O = urate + H2O2. With respect to regulation, can be converted from the dehydrogenase form (D) to the oxidase form (O) irreversibly by proteolysis or reversibly through the oxidation of sulfhydryl groups. Its function is as follows. Key enzyme in purine degradation. Catalyzes the oxidation of hypoxanthine to xanthine. Catalyzes the oxidation of xanthine to uric acid. Contributes to the generation of reactive oxygen species. This Rattus norvegicus (Rat) protein is Xanthine dehydrogenase/oxidase (Xdh).